A 997-amino-acid polypeptide reads, in one-letter code: Protein translocase subunit SecA (997 aa).

Residues Gln-84, Gly-102–Thr-106, and Asp-582 each bind ATP. Residues Pro-950–Lys-997 are disordered. A compositionally biased stretch (basic and acidic residues) spans Ala-957 to Arg-971. Basic residues predominate over residues Glu-984–Lys-997.

This sequence belongs to the SecA family. Part of the essential Sec protein translocation apparatus which comprises SecA, SecYEG and auxiliary proteins SecDF. Other proteins may also be involved. Monomer and homodimer.

It localises to the cell inner membrane. The protein localises to the cytoplasm. It carries out the reaction ATP + H2O + cellular proteinSide 1 = ADP + phosphate + cellular proteinSide 2.. Its function is as follows. Part of the Sec protein translocase complex. Interacts with the SecYEG preprotein conducting channel. Has a central role in coupling the hydrolysis of ATP to the transfer of proteins into and across the cell membrane, serving as an ATP-driven molecular motor driving the stepwise translocation of polypeptide chains across the membrane. The protein is Protein translocase subunit SecA of Thermus thermophilus (strain ATCC 27634 / DSM 579 / HB8).